The primary structure comprises 291 residues: Ribose-phosphate pyrophosphokinase (291 aa).

Residues 34-36 (DGE) and 92-93 (RQ) contribute to the ATP site. Mg(2+)-binding residues include His-125 and Asp-165. The active site involves Lys-188. Residues Arg-190 and Asp-214 each contribute to the D-ribose 5-phosphate site.

This sequence belongs to the ribose-phosphate pyrophosphokinase family. Class III (archaeal) subfamily. Mg(2+) serves as cofactor.

Its subcellular location is the cytoplasm. The catalysed reaction is D-ribose 5-phosphate + ATP = 5-phospho-alpha-D-ribose 1-diphosphate + AMP + H(+). It participates in metabolic intermediate biosynthesis; 5-phospho-alpha-D-ribose 1-diphosphate biosynthesis; 5-phospho-alpha-D-ribose 1-diphosphate from D-ribose 5-phosphate (route I): step 1/1. Its function is as follows. Involved in the biosynthesis of the central metabolite phospho-alpha-D-ribosyl-1-pyrophosphate (PRPP) via the transfer of pyrophosphoryl group from ATP to 1-hydroxyl of ribose-5-phosphate (Rib-5-P). In Methanopyrus kandleri (strain AV19 / DSM 6324 / JCM 9639 / NBRC 100938), this protein is Ribose-phosphate pyrophosphokinase.